The chain runs to 249 residues: MIVFPAIDLMNGVCVRLRRGRADDETVFSSDPVATARHWQEQGGRWLHVVDLDGAFSGQPVNAPLIRSICDALDIPVQLGGGIRDAATAKAYLEAGVERLIIGTIALEEPDAYAALCAEFPGRIGVSLDAEGGKLKTKGWVADSGLTVDEVLPRLLEAGTAFIIYTDIDRDGMQTGVNLPALEHLAKASTVPVIAAGGVATLEDVKALYPLSRTTNLQGAVSGRAIYEGTLDLRTAMDWIRQQEKAEAC.

D8 functions as the Proton acceptor in the catalytic mechanism. D129 (proton donor) is an active-site residue.

It belongs to the HisA/HisF family.

Its subcellular location is the cytoplasm. The enzyme catalyses 1-(5-phospho-beta-D-ribosyl)-5-[(5-phospho-beta-D-ribosylamino)methylideneamino]imidazole-4-carboxamide = 5-[(5-phospho-1-deoxy-D-ribulos-1-ylimino)methylamino]-1-(5-phospho-beta-D-ribosyl)imidazole-4-carboxamide. It functions in the pathway amino-acid biosynthesis; L-histidine biosynthesis; L-histidine from 5-phospho-alpha-D-ribose 1-diphosphate: step 4/9. This is 1-(5-phosphoribosyl)-5-[(5-phosphoribosylamino)methylideneamino] imidazole-4-carboxamide isomerase from Nitratidesulfovibrio vulgaris (strain ATCC 29579 / DSM 644 / CCUG 34227 / NCIMB 8303 / VKM B-1760 / Hildenborough) (Desulfovibrio vulgaris).